A 172-amino-acid chain; its full sequence is Thioredoxin Y1, chloroplastic (172 aa).

Residues Met-1–Arg-62 constitute a chloroplast transit peptide. Positions Ile-63–Lys-169 constitute a Thioredoxin domain. Catalysis depends on nucleophile residues Cys-93 and Cys-96. The cysteines at positions 93 and 96 are disulfide-linked.

This sequence belongs to the thioredoxin family. Plant Y-type subfamily. As to expression, expressed in roots and seeds.

The protein resides in the plastid. It localises to the chloroplast stroma. Its function is as follows. Thiol-disulfide oxidoreductase that poorly activates chloroplastic malate dehydrogenase (NADP-MDH) and fructose-1,6-bisphosphatase. Provides reducing equivalents for peroxiredoxin Q. The sequence is that of Thioredoxin Y1, chloroplastic from Arabidopsis thaliana (Mouse-ear cress).